Consider the following 200-residue polypeptide: Potassium-transporting ATPase KdpC subunit (200 aa).

Residues 6 to 26 (PAVVLLILLTLITGIAYPLLT) form a helical membrane-spanning segment.

This sequence belongs to the KdpC family. The system is composed of three essential subunits: KdpA, KdpB and KdpC.

The protein localises to the cell inner membrane. Functionally, part of the high-affinity ATP-driven potassium transport (or Kdp) system, which catalyzes the hydrolysis of ATP coupled with the electrogenic transport of potassium into the cytoplasm. This subunit acts as a catalytic chaperone that increases the ATP-binding affinity of the ATP-hydrolyzing subunit KdpB by the formation of a transient KdpB/KdpC/ATP ternary complex. This is Potassium-transporting ATPase KdpC subunit from Yersinia enterocolitica serotype O:8 / biotype 1B (strain NCTC 13174 / 8081).